The primary structure comprises 131 residues: Large ribosomal subunit protein bL17 (131 aa).

The protein belongs to the bacterial ribosomal protein bL17 family. Part of the 50S ribosomal subunit. Contacts protein L32.

The protein is Large ribosomal subunit protein bL17 of Methylacidiphilum infernorum (isolate V4) (Methylokorus infernorum (strain V4)).